We begin with the raw amino-acid sequence, 285 residues long: Casein kinase II subunit beta-2 (285 aa).

Positions 226–285 are disordered; the sequence is FKDAEDEAELDDDDEEEEEEEEEEEELAAMDEAEGAQQQHAAAAAGTATGGVAAGGEGVH. A compositionally biased stretch (acidic residues) spans 229-259; it reads AEDEAELDDDDEEEEEEEEEEEELAAMDEAE. Over residues 260–272 the composition is skewed to low complexity; the sequence is GAQQQHAAAAAGT. Over residues 273 to 285 the composition is skewed to gly residues; the sequence is ATGGVAAGGEGVH.

It belongs to the casein kinase 2 subunit beta family. Tetramer composed of two alpha chains, one beta chain and one beta' chain. Post-translationally, phosphorylated by alpha subunit.

Functionally, regulatory subunit of casein kinase II/CK2. As part of the kinase complex regulates the basal catalytic activity of the alpha subunit a constitutively active serine/threonine-protein kinase that phosphorylates a large number of substrates containing acidic residues C-terminal to the phosphorylated serine or threonine. This is Casein kinase II subunit beta-2 (ckb-2) from Neurospora crassa (strain ATCC 24698 / 74-OR23-1A / CBS 708.71 / DSM 1257 / FGSC 987).